Consider the following 225-residue polypeptide: Two-component response regulator ARR8 (225 aa).

A Response regulatory domain is found at 10–145 (HVLAVDDSLF…DLTKLKPHMM (136 aa)). The residue at position 78 (Asp78) is a 4-aspartylphosphate.

The protein belongs to the ARR family. Type-A subfamily. In terms of processing, two-component system major event consists of a His-to-Asp phosphorelay between a sensor histidine kinase (HK) and a response regulator (RR). In plants, the His-to-Asp phosphorelay involves an additional intermediate named Histidine-containing phosphotransfer protein (HPt). This multistep phosphorelay consists of a His-Asp-His-Asp sequential transfer of a phosphate group between first a His and an Asp of the HK protein, followed by the transfer to a conserved His of the HPt protein and finally the transfer to an Asp in the receiver domain of the RR protein. Predominantly expressed in roots.

The protein localises to the nucleus. Functionally, functions as a response regulator involved in His-to-Asp phosphorelay signal transduction system. Phosphorylation of the Asp residue in the receiver domain activates the ability of the protein to promote the transcription of target genes. Type-A response regulators seem to act as negative regulators of the cytokinin signaling. In Arabidopsis thaliana (Mouse-ear cress), this protein is Two-component response regulator ARR8 (ARR8).